The primary structure comprises 88 residues: Cell division topological specificity factor (88 aa).

The protein belongs to the MinE family.

In terms of biological role, prevents the cell division inhibition by proteins MinC and MinD at internal division sites while permitting inhibition at polar sites. This ensures cell division at the proper site by restricting the formation of a division septum at the midpoint of the long axis of the cell. This chain is Cell division topological specificity factor, found in Cronobacter sakazakii (strain ATCC BAA-894) (Enterobacter sakazakii).